The primary structure comprises 777 residues: Polyribonucleotide nucleotidyltransferase (777 aa).

Mg(2+)-binding residues include Asp494 and Asp500. The 60-residue stretch at 561–620 folds into the KH domain; the sequence is PRIITLQIDPSKIGALIGPGGKTIRSIIEQTGAQIDVEDDGRVFVTTPDADGARMAQSLI. An S1 motif domain is found at 630–699; the sequence is GEIFTGKVVR…GTGKLSLSRR (70 aa). A disordered region spans residues 703–777; it reads TGETAEQRKS…NDRRGGGFRG (75 aa). Positions 718–727 are enriched in gly residues; it reads GPRGGGGGGD. Basic and acidic residues-rich tracts occupy residues 728 to 761 and 768 to 777; these read RGPR…DRGP and NDRRGGGFRG.

This sequence belongs to the polyribonucleotide nucleotidyltransferase family. It depends on Mg(2+) as a cofactor.

The protein localises to the cytoplasm. The enzyme catalyses RNA(n+1) + phosphate = RNA(n) + a ribonucleoside 5'-diphosphate. In terms of biological role, involved in mRNA degradation. Catalyzes the phosphorolysis of single-stranded polyribonucleotides processively in the 3'- to 5'-direction. This Herpetosiphon aurantiacus (strain ATCC 23779 / DSM 785 / 114-95) protein is Polyribonucleotide nucleotidyltransferase.